A 1338-amino-acid chain; its full sequence is P-type sodium-transporting ATPase4 (1338 aa).

The segment at 1-106 (MAARASADKL…KSISSVSQMH (106 aa)) is disordered. Positions 55-69 (AEEKVAGHDGESPRR) are enriched in basic and acidic residues. A compositionally biased stretch (polar residues) spans 91 to 104 (GHSQLGKSISSVSQ). 8 consecutive transmembrane segments (helical) span residues 229 to 249 (IFIQ…AIAS), 255 to 275 (WVEG…ATYM), 418 to 438 (LGGM…VVAI), 456 to 476 (IVLV…PMVV), 985 to 1005 (FVCF…IAIA), 1068 to 1088 (IFEA…CTGV), 1261 to 1281 (MHLA…VPGI), and 1288 to 1308 (CALP…NLIL).

It belongs to the cation transport ATPase (P-type) (TC 3.A.3) family.

Its subcellular location is the cell membrane. It carries out the reaction Na(+)(in) + ATP + H2O = Na(+)(out) + ADP + phosphate + H(+). Its activity is regulated as follows. Inhibited by cipargamin, a synthetic spiroindolone. Inhibited by pyrazoleamide PA21A050, structurally unrelated to the spiroindolones. Inhibited by (+)-SJ733, a dihydroisoquinolone compound. In terms of biological role, sodium-exporting ATPase. Required for the extrusion of Na(+) from the parasites to maintain a low cytosolic concentration of Na(+). Required for maintaining the viability of extracellular parasites but not for intracellular growth, egress or invasion. Involved in parasite virulence. This is P-type sodium-transporting ATPase4 from Toxoplasma gondii (strain ATCC 50861 / VEG).